Here is a 151-residue protein sequence, read N- to C-terminus: UPF0208 membrane protein plu3094 (151 aa).

Transmembrane regions (helical) follow at residues F46–L65 and L69–G91.

This sequence belongs to the UPF0208 family.

The protein localises to the cell inner membrane. The sequence is that of UPF0208 membrane protein plu3094 from Photorhabdus laumondii subsp. laumondii (strain DSM 15139 / CIP 105565 / TT01) (Photorhabdus luminescens subsp. laumondii).